A 35-amino-acid chain; its full sequence is Neurotoxin (35 aa).

Cystine bridges form between Cys7-Cys27, Cys14-Cys32, and Cys18-Cys34.

In terms of tissue distribution, expressed by the venom gland.

The protein localises to the secreted. Its function is as follows. Neurotoxin. Decreases the action potential of myelinated nerves in mice and frogs. The chain is Neurotoxin from Buthus sp. (strain IY-2001) (Scorpion).